A 423-amino-acid polypeptide reads, in one-letter code: Glucose-1-phosphate adenylyltransferase (423 aa).

Residues Tyr107, Gly172, Glu187 to Lys188, and Ser205 each bind alpha-D-glucose 1-phosphate.

It belongs to the bacterial/plant glucose-1-phosphate adenylyltransferase family. Homotetramer.

The catalysed reaction is alpha-D-glucose 1-phosphate + ATP + H(+) = ADP-alpha-D-glucose + diphosphate. The protein operates within glycan biosynthesis; glycogen biosynthesis. Functionally, involved in the biosynthesis of ADP-glucose, a building block required for the elongation reactions to produce glycogen. Catalyzes the reaction between ATP and alpha-D-glucose 1-phosphate (G1P) to produce pyrophosphate and ADP-Glc. The chain is Glucose-1-phosphate adenylyltransferase from Albidiferax ferrireducens (strain ATCC BAA-621 / DSM 15236 / T118) (Rhodoferax ferrireducens).